Here is a 152-residue protein sequence, read N- to C-terminus: Transcriptional regulator MraZ (152 aa).

2 consecutive SpoVT-AbrB domains span residues 5–51 and 80–123; these read VNSI…PLPE and AAEC…DEVL.

Belongs to the MraZ family. In terms of assembly, forms oligomers.

Its subcellular location is the cytoplasm. The protein localises to the nucleoid. The protein is Transcriptional regulator MraZ of Methylococcus capsulatus (strain ATCC 33009 / NCIMB 11132 / Bath).